The following is a 265-amino-acid chain: Glutamate racemase (265 aa).

Substrate is bound by residues 12 to 13 (DS) and 44 to 45 (YG). The active-site Proton donor/acceptor is the Cys75. Residue 76–77 (NT) coordinates substrate. Cys183 (proton donor/acceptor) is an active-site residue. Residue 184–185 (TH) participates in substrate binding.

This sequence belongs to the aspartate/glutamate racemases family.

It carries out the reaction L-glutamate = D-glutamate. Its pathway is cell wall biogenesis; peptidoglycan biosynthesis. Functionally, provides the (R)-glutamate required for cell wall biosynthesis. This chain is Glutamate racemase, found in Carboxydothermus hydrogenoformans (strain ATCC BAA-161 / DSM 6008 / Z-2901).